Reading from the N-terminus, the 83-residue chain is Mu-theraphotoxin-Hhn2p (83 aa).

The signal sequence occupies residues 1–21 (MKASMYLALAGLVLLFVVGYA). The propeptide occupies 22 to 48 (SESEEKEFPRELLSKIFAVDDFKGEER). Intrachain disulfides connect Cys-50/Cys-65, Cys-57/Cys-70, and Cys-64/Cys-77. The residue at position 81 (Leu-81) is a Leucine amide.

It belongs to the neurotoxin 10 (Hwtx-1) family. 15 (Hntx-3) subfamily. In terms of assembly, monomer. Expressed by the venom gland.

The protein localises to the secreted. In terms of biological role, lethal neurotoxin. Selectively blocks tetrodotoxin-sensitive voltage-gated sodium channels (Nav). Does not affect tetrodotoxin-resistant voltage-gated sodium channels or calcium channels. This Cyriopagopus hainanus (Chinese bird spider) protein is Mu-theraphotoxin-Hhn2p.